The sequence spans 570 residues: Urease subunit alpha (570 aa).

Positions 132 to 570 constitute a Urease domain; the sequence is GGIDTHVHFL…VPMARRYFLF (439 aa). Residues H137, H139, and K220 each contribute to the Ni(2+) site. K220 carries the N6-carboxylysine modification. H222 is a binding site for substrate. Ni(2+) is bound by residues H249 and H275. H323 serves as the catalytic Proton donor. D363 provides a ligand contact to Ni(2+).

The protein belongs to the metallo-dependent hydrolases superfamily. Urease alpha subunit family. Heterotrimer of UreA (gamma), UreB (beta) and UreC (alpha) subunits. Three heterotrimers associate to form the active enzyme. The cofactor is Ni cation. Carboxylation allows a single lysine to coordinate two nickel ions.

Its subcellular location is the cytoplasm. The enzyme catalyses urea + 2 H2O + H(+) = hydrogencarbonate + 2 NH4(+). The protein operates within nitrogen metabolism; urea degradation; CO(2) and NH(3) from urea (urease route): step 1/1. In Corynebacterium glutamicum (strain ATCC 13032 / DSM 20300 / JCM 1318 / BCRC 11384 / CCUG 27702 / LMG 3730 / NBRC 12168 / NCIMB 10025 / NRRL B-2784 / 534), this protein is Urease subunit alpha.